Consider the following 254-residue polypeptide: MTGAVTSAYWLAAVAFLIGVGITAALYAKLEGSRARTRLAALAVIPGFAGLSYVGMALGIGTVTVNGAELVGLRYVDWVVTTPLLVGFIGYNAGASRRAIAGVMIADALMIVFGAAAVVSGGTLKWALFGVSALFHVSLFAYLYVIFPGGIPDDPMQRGLFSLLKNHVGLLWLAYPFVWLMGPAGIGFTGAVGAALTYAFLDVLAKVPYVYFFYARRQAFIDVTDSRAAAKGDGPAVGGEAPVATGDDAPTAAD.

The Extracellular segment spans residues 1–4 (MTGA). A helical membrane pass occupies residues 5–26 (VTSAYWLAAVAFLIGVGITAAL). The Cytoplasmic segment spans residues 27–35 (YAKLEGSRA). Residues 36-57 (RTRLAALAVIPGFAGLSYVGMA) traverse the membrane as a helical segment. At 58–71 (LGIGTVTVNGAELV) the chain is on the extracellular side. A helical transmembrane segment spans residues 72 to 93 (GLRYVDWVVTTPLLVGFIGYNA). The Cytoplasmic segment spans residues 94-96 (GAS). A helical membrane pass occupies residues 97 to 119 (RRAIAGVMIADALMIVFGAAAVV). Over 120–123 (SGGT) the chain is Extracellular. A helical membrane pass occupies residues 124–151 (LKWALFGVSALFHVSLFAYLYVIFPGGI). The Cytoplasmic segment spans residues 152 to 154 (PDD). Residues 155-182 (PMQRGLFSLLKNHVGLLWLAYPFVWLMG) form a helical membrane-spanning segment. Topologically, residues 183-190 (PAGIGFTG) are extracellular. Residues 191–223 (AVGAALTYAFLDVLAKVPYVYFFYARRQAFIDV) traverse the membrane as a helical segment. The residue at position 206 (Lys206) is an N6-(retinylidene)lysine. The Cytoplasmic segment spans residues 224–254 (TDSRAAAKGDGPAVGGEAPVATGDDAPTAAD). The interval 231-254 (KGDGPAVGGEAPVATGDDAPTAAD) is disordered.

Belongs to the archaeal/bacterial/fungal opsin family.

The protein resides in the cell membrane. Involved in the control of phototaxis. This Halorubrum sodomense protein is Sensory rhodopsin (sop).